The primary structure comprises 260 residues: Endomucin (260 aa).

The N-terminal stretch at 1–18 (MELLQVTILFLLPSICSS) is a signal peptide. N-linked (GlcNAc...) asparagine glycans are attached at residues Asn-19, Asn-28, Asn-97, and Asn-103. The Extracellular portion of the chain corresponds to 19–189 (NSTGVLEAAN…TSATSRSYSS (171 aa)). Polar residues-rich tracts occupy residues 119–133 (QSSKPKTETQSSIKT) and 145–170 (ASPSETGTLSSIPVTIPENTSQSQVI). The segment at 119–182 (QSSKPKTETQ…EGGKNASTSA (64 aa)) is disordered. Asn-163 and Asn-177 each carry an N-linked (GlcNAc...) asparagine glycan. A helical transmembrane segment spans residues 190 to 210 (IILPVVIALIVITLSVFVLVG). At 211 to 260 (LYRMCWKADPGTPENGNDQPQSDKESVKLLTVKTISHESGEHSAQGKTKN) the chain is on the cytoplasmic side. Ser-236 carries the phosphoserine modification.

In terms of processing, highly O-glycosylated. Sialic acid-rich glycoprotein.

The protein localises to the membrane. In terms of biological role, endothelial sialomucin, also called endomucin or mucin-like sialoglycoprotein, which interferes with the assembly of focal adhesion complexes and inhibits interaction between cells and the extracellular matrix. The protein is Endomucin (EMCN) of Pongo abelii (Sumatran orangutan).